The chain runs to 540 residues: Telomerase Cajal body protein 1 (540 aa).

A compositionally biased stretch (pro residues) spans 1-10; sequence MKTPEAPPLA. A disordered region spans residues 1–126; it reads MKTPEAPPLA…GEDVEGVSEE (126 aa). Phosphoserine is present on residues S26, S30, S54, S64, S85, and S90. Acidic residues predominate over residues 116-126; the sequence is PGEDVEGVSEE. 6 WD repeats span residues 158–197, 213–258, 263–304, 314–355, 356–396, and 402–441; these read QPEN…YNEG, EGDT…LRAS, NHLD…RDCE, GQSG…ALLG, GHQG…HPLW, and VTTN…LESK. At T480 the chain carries Phosphothreonine. S482 carries the phosphoserine modification. The tract at residues 520 to 540 is disordered; the sequence is SDAHQEEMGQGRTEGGGGEFT. Residues 531-540 are compositionally biased toward gly residues; the sequence is RTEGGGGEFT.

The protein belongs to the TCAB1 family. As to quaternary structure, component of the telomerase holoenzyme complex composed of one molecule of TERT, one molecule of WRAP53/TCAB1, two molecules of H/ACA ribonucleoprotein complex subunits DKC1, NOP10, NHP2 and GAR1, and a telomerase RNA template component (TERC). The telomerase holoenzyme complex is associated with TEP1, SMG6/EST1A and POT1. Interacts with the chaperonin-containing T-complex (TRiC) complex; which mediates the folding of WRAP53/TCAB1. Interacts with COIL. Interacts with SMN1. Interacts with RNF8. Interacts with histone H2AX. Phosphorylated at Ser-64 by ATM in response to DNA damage, promoting its interaction with histone H2AX and localization to sites of DNA double-strand breaks.

The protein localises to the nucleus. It localises to the cajal body. It is found in the chromosome. The protein resides in the telomere. RNA chaperone that plays a key role in telomere maintenance and RNA localization to Cajal bodies. Specifically recognizes and binds the Cajal body box (CAB box) present in both small Cajal body RNAs (scaRNAs) and telomerase RNA template component (TERC). Essential component of the telomerase holoenzyme complex, a ribonucleoprotein complex essential for the replication of chromosome termini that elongates telomeres in most eukaryotes. In the telomerase holoenzyme complex, required to stimulate the catalytic activity of the complex. Acts by specifically binding the CAB box of the TERC RNA and controlling the folding of the CR4/CR5 region of the TERC RNA, a critical step for telomerase activity. In addition, also controls telomerase holoenzyme complex localization to Cajal body. During S phase, required for delivery of TERC to telomeres during S phase and for telomerase activity. In addition to its role in telomere maintenance, also required for Cajal body formation, probably by mediating localization of scaRNAs to Cajal bodies. Also plays a role in DNA repair: phosphorylated by ATM in response to DNA damage and relocalizes to sites of DNA double-strand breaks to promote the repair of DNA double-strand breaks. Acts by recruiting the ubiquitin ligase RNF8 to DNA breaks and promote both homologous recombination (HR) and non-homologous end joining (NHEJ). The chain is Telomerase Cajal body protein 1 from Bos taurus (Bovine).